Reading from the N-terminus, the 334-residue chain is Transaldolase (334 aa).

K136 serves as the catalytic Schiff-base intermediate with substrate.

It belongs to the transaldolase family. Type 1 subfamily. In terms of assembly, homodimer.

It is found in the cytoplasm. It catalyses the reaction D-sedoheptulose 7-phosphate + D-glyceraldehyde 3-phosphate = D-erythrose 4-phosphate + beta-D-fructose 6-phosphate. It functions in the pathway carbohydrate degradation; pentose phosphate pathway; D-glyceraldehyde 3-phosphate and beta-D-fructose 6-phosphate from D-ribose 5-phosphate and D-xylulose 5-phosphate (non-oxidative stage): step 2/3. Transaldolase is important for the balance of metabolites in the pentose-phosphate pathway. The protein is Transaldolase of Nostoc punctiforme (strain ATCC 29133 / PCC 73102).